The sequence spans 376 residues: NifS-like protein (376 aa).

Residues 58–59 (SE) and 184–186 (SLN) contribute to the pyridoxal 5'-phosphate site.

The protein belongs to the class-V pyridoxal-phosphate-dependent aminotransferase family. NifS/IscS subfamily. Pyridoxal 5'-phosphate is required as a cofactor.

Its subcellular location is the virion. In African swine fever virus (isolate Tick/Malawi/Lil 20-1/1983) (ASFV), this protein is NifS-like protein.